The following is a 191-amino-acid chain: MKKNLLGFTFASLLFTTGSAVAAEYKIDKEGQHAFVNFRIQHLGYSWLYGTFKDFDGTFTFDEKNPSADKVNVTINTNSVDTNHAERDKHLRSAEFLNVAKFPQATFTSTSVKKEGDELDITGNLTLNGVTKPVTLEAKLMGQGDDPWGGKRAGFEAEGKIKLKDFNITTDLGPASQEVELIISVEGVQQK.

The N-terminal stretch at 1-22 (MKKNLLGFTFASLLFTTGSAVA) is a signal peptide.

Belongs to the UPF0312 family. Type 1 subfamily.

It localises to the periplasm. The protein is Protein YceI of Salmonella agona (strain SL483).